A 111-amino-acid polypeptide reads, in one-letter code: WAP four-disulfide core domain protein 12 (111 aa).

Positions 1–23 (MGSSSFLVLMVSLVLVTLVAVEG) are cleaved as a signal peptide. The WAP domain occupies 27 to 74 (GIEKAGVCPADNVRCFKSDPPQCHTDQDCLGERKCCYLHCGFKCVIPV). Cystine bridges form between cysteine 34-cysteine 62, cysteine 41-cysteine 66, cysteine 49-cysteine 61, and cysteine 55-cysteine 70. Residues 80 to 111 (GGNKDEDVSRPYPEPGWEAKCPGSSSTRCPQK) are disordered. Polar residues predominate over residues 102–111 (GSSSTRCPQK).

As to expression, highly expressed in prostate, skin, lung and esophagus. Weakly expressed in skeletal muscle, epididymis, kidney, trachea, salivary gland, testis and seminal vesicle.

Its subcellular location is the secreted. Antibacterial protein. Putative acid-stable proteinase inhibitor. The polypeptide is WAP four-disulfide core domain protein 12 (WFDC12) (Homo sapiens (Human)).